The primary structure comprises 574 residues: Membralin (574 aa).

The disordered stretch occupies residues 1–27 (MSEHAAAPGPGPNGGGGGGAAPVRGPR). Position 2 is an N-acetylserine (Ser2). Residues 69 to 89 (FFVLLKALFVLFVLAYIHIVF) form a helical membrane-spanning segment. N-linked (GlcNAc...) asparagine glycosylation occurs at Asn180. The next 3 helical transmembrane spans lie at 293–313 (TSYL…SMLL), 337–357 (IAFP…MEAI), and 417–437 (YSSL…IYFF). Composition is skewed to low complexity over residues 461-470 (LGPGTPTALP) and 491-501 (LGPSSSPAPTG). Disordered regions lie at residues 461-515 (LGPG…GASV) and 546-574 (RRPT…PAGS).

Belongs to the membralin family. In terms of assembly, interacts with ERLIN2. In terms of tissue distribution, detected in brain, spinal cord, lung, liver and kidney.

The protein localises to the endoplasmic reticulum membrane. Functionally, may have a role in the ERAD pathway required for clearance of misfolded proteins in the endoplasmic reticulum (ER). Promotes survival of motor neurons, probably by protecting against ER stress. This is Membralin (Tmem259) from Mus musculus (Mouse).